Consider the following 195-residue polypeptide: Recombination protein RecR (195 aa).

The C4-type zinc finger occupies 54 to 69 (CTICGSYTEDEICSIC). A Toprim domain is found at 77 to 172 (ATICVVGFPQ…NITRLASGLP (96 aa)).

Belongs to the RecR family.

Its function is as follows. May play a role in DNA repair. It seems to be involved in an RecBC-independent recombinational process of DNA repair. It may act with RecF and RecO. The sequence is that of Recombination protein RecR from Treponema denticola (strain ATCC 35405 / DSM 14222 / CIP 103919 / JCM 8153 / KCTC 15104).